A 188-amino-acid polypeptide reads, in one-letter code: Peptidyl-prolyl cis-trans isomerase H (188 aa).

An N-acetylalanine modification is found at alanine 2. The PPIase cyclophilin-type domain maps to 14–176 (FFDVSIGGQE…WTHSLTCPAL (163 aa)).

It belongs to the cyclophilin-type PPIase family. PPIase H subfamily. Interacts directly with PRPF4. Part of a heteromeric complex containing PPIH, PRPF3 and PRPF4 that is stable in the absence of RNA. Component of the U4/U6-U5 tri-snRNP complex composed of the U4, U6 and U5 snRNAs and at least PRPF3, PRPF4, PRPF6, PRPF8, PRPF31, SNRNP200, TXNL4A, SNRNP40, DDX23, CD2BP2, PPIH, SNU13, EFTUD2, SART1 and USP39. Heterodimer with PRPF18. Heterodimer with PRPF18.

It is found in the nucleus speckle. The protein resides in the cytoplasm. It catalyses the reaction [protein]-peptidylproline (omega=180) = [protein]-peptidylproline (omega=0). With respect to regulation, inhibited by cyclosporin A. Its function is as follows. PPIase that catalyzes the cis-trans isomerization of proline imidic peptide bonds in oligopeptides and may therefore assist protein folding. Participates in pre-mRNA splicing. May play a role in the assembly of the U4/U5/U6 tri-snRNP complex, one of the building blocks of the spliceosome. May act as a chaperone. This Mus musculus (Mouse) protein is Peptidyl-prolyl cis-trans isomerase H (Ppih).